Reading from the N-terminus, the 368-residue chain is Glucose 1-dehydrogenase 2 (368 aa).

Zn(2+) is bound at residue Cys41. Thr43 serves as a coordination point for substrate. Residues His68 and Glu69 each coordinate Zn(2+). Asn91 is a binding site for substrate. Zn(2+)-binding residues include Cys95, Cys98, Cys101, Cys109, and Gln152. Residues Gln152 and Asp156 each coordinate substrate. NADP(+)-binding positions include 213–215 (NRR), 279–281 (FGF), 307–309 (LDN), and Lys356. Asn309 serves as a coordination point for substrate.

The protein belongs to the zinc-containing alcohol dehydrogenase family. Glucose 1-dehydrogenase subfamily. Requires Zn(2+) as cofactor.

It catalyses the reaction D-glucose + NAD(+) = D-glucono-1,5-lactone + NADH + H(+). The catalysed reaction is D-glucose + NADP(+) = D-glucono-1,5-lactone + NADPH + H(+). Its function is as follows. Catalyzes the NAD(P)(+)-dependent oxidation of D-glucose to D-gluconate via gluconolactone. Can utilize both NAD(+) and NADP(+) as electron acceptor. Is involved in the degradation of glucose through a non-phosphorylative variant of the Entner-Doudoroff pathway. This is Glucose 1-dehydrogenase 2 from Saccharolobus solfataricus (strain ATCC 35092 / DSM 1617 / JCM 11322 / P2) (Sulfolobus solfataricus).